The sequence spans 1042 residues: Starch synthase 3, chloroplastic/amyloplastic (1042 aa).

A chloroplast-targeting transit peptide spans 1–44 (MISYFLNQDFSRKKQGRMAASGPKSSGPRGFGRRTTVGSAQKRT). Positions 1 to 63 (MISYFLNQDF…NATSTATNEV (63 aa)) are disordered. The span at 54-63 (NATSTATNEV) shows a compositional bias: polar residues. Residues 247 to 302 (ENFLLEEKLREQEKLAKEEAERERQKEEKRRIEAQKAAIEADRAQAKAETQKRREL) adopt a coiled-coil conformation. Lysine 608 lines the ADP-alpha-D-glucose pocket.

Belongs to the glycosyltransferase 1 family. Bacterial/plant glycogen synthase subfamily. In terms of tissue distribution, expressed in leaves and flowers.

It is found in the plastid. The protein localises to the chloroplast. The protein resides in the amyloplast. The enzyme catalyses [(1-&gt;4)-alpha-D-glucosyl](n) + ADP-alpha-D-glucose = [(1-&gt;4)-alpha-D-glucosyl](n+1) + ADP + H(+). Its pathway is glycan biosynthesis; starch biosynthesis. Its function is as follows. Involved in the synthesis of glycan chains within amylopectin in leaves. May play a regulatory role in the control of starch accumulation in plastids. The chain is Starch synthase 3, chloroplastic/amyloplastic (SS3) from Arabidopsis thaliana (Mouse-ear cress).